Here is a 251-residue protein sequence, read N- to C-terminus: Ubiquinone/menaquinone biosynthesis C-methyltransferase UbiE (251 aa).

S-adenosyl-L-methionine is bound by residues T74, D95, 123–124 (NA), and S140.

The protein belongs to the class I-like SAM-binding methyltransferase superfamily. MenG/UbiE family.

It carries out the reaction a 2-demethylmenaquinol + S-adenosyl-L-methionine = a menaquinol + S-adenosyl-L-homocysteine + H(+). The enzyme catalyses a 2-methoxy-6-(all-trans-polyprenyl)benzene-1,4-diol + S-adenosyl-L-methionine = a 5-methoxy-2-methyl-3-(all-trans-polyprenyl)benzene-1,4-diol + S-adenosyl-L-homocysteine + H(+). It functions in the pathway quinol/quinone metabolism; menaquinone biosynthesis; menaquinol from 1,4-dihydroxy-2-naphthoate: step 2/2. It participates in cofactor biosynthesis; ubiquinone biosynthesis. In terms of biological role, methyltransferase required for the conversion of demethylmenaquinol (DMKH2) to menaquinol (MKH2) and the conversion of 2-polyprenyl-6-methoxy-1,4-benzoquinol (DDMQH2) to 2-polyprenyl-3-methyl-6-methoxy-1,4-benzoquinol (DMQH2). The sequence is that of Ubiquinone/menaquinone biosynthesis C-methyltransferase UbiE from Yersinia pestis bv. Antiqua (strain Antiqua).